A 187-amino-acid chain; its full sequence is Elongation factor P (187 aa).

Belongs to the elongation factor P family.

Its subcellular location is the cytoplasm. It participates in protein biosynthesis; polypeptide chain elongation. Its function is as follows. Involved in peptide bond synthesis. Stimulates efficient translation and peptide-bond synthesis on native or reconstituted 70S ribosomes in vitro. Probably functions indirectly by altering the affinity of the ribosome for aminoacyl-tRNA, thus increasing their reactivity as acceptors for peptidyl transferase. The protein is Elongation factor P (efp) of Treponema pallidum (strain Nichols).